The sequence spans 86 residues: U-myrmeciitoxin(01)-Mg1a (86 aa).

A signal peptide spans 1 to 26 (MKLLYLLLTLAIIFVLTIVHAPNVEA). A propeptide spanning residues 27 to 52 (KALADPESDAVGFADAFGDADAEATG) is cleaved from the precursor. Leu85 carries the leucine amide modification.

It belongs to the formicidae venom precursor-01 superfamily. As to expression, expressed by the venom gland. This toxin is detected along the entire venom gland, as well as in the venom reservoir, the venom duct and in the venom. No toxin are detected in the Dufour's gland.

It is found in the secreted. The protein resides in the target cell membrane. Its function is as follows. Toxin that may interact with target cell membranes, producing a concentration-dependent leak in ion conductance, possibly via multimeric pore formation. It produces an immediate sharp increase of calcium concentration in all DRG neurons. This influx in calcium stabilizes without resulting in any observable dye leakage, showing that the effect is not simply cytolytic. This toxin may be one of the major contributors to the pain associated with envenomation. The toxin also displays a weak cytotoxicity (on HEK cells) and some antimicrobial activity (MIC=2.5 uM on C.neoformans (var. grubii), MIC=10.2 uM on S.aureus), but is not hemolytic to human erythtrocytes. In vivo, intraplantar injection into mice causes spontaneous nocifensive behavior (licking, flinching, or shaking of the paw), which lasts 5-7 minutes (10 and 100 uM tested). Mechanical and heat hypoalgesia are observed at 20 and 25 minutes after injection (highest dose tested of 100 uM). In vivo, injection into crickets (A.domesticus) causes an immediate, dose-dependent, reversible and nonlethal incapacitation that lasts about 53 minutes at the highest dose tested (60 ug/g). This is U-myrmeciitoxin(01)-Mg1a from Myrmecia gulosa (Red bulldog ant).